Reading from the N-terminus, the 82-residue chain is MPKRTLQGVVVSDKQAKTVVVRVDRRFTHPIYKKTIRRSKNYHAHDENNEFKPGDMVWIEESKPISKLKRWTVVRGEQRKTA.

The protein belongs to the universal ribosomal protein uS17 family. In terms of assembly, part of the 30S ribosomal subunit.

Functionally, one of the primary rRNA binding proteins, it binds specifically to the 5'-end of 16S ribosomal RNA. The polypeptide is Small ribosomal subunit protein uS17 (Nitrobacter winogradskyi (strain ATCC 25391 / DSM 10237 / CIP 104748 / NCIMB 11846 / Nb-255)).